The sequence spans 429 residues: 3-phosphoshikimate 1-carboxyvinyltransferase (429 aa).

Residues K22, S23, and R27 each coordinate 3-phosphoshikimate. K22 provides a ligand contact to phosphoenolpyruvate. The phosphoenolpyruvate site is built by G93 and R122. The 3-phosphoshikimate site is built by S168, S169, Q170, S196, D311, and K338. Phosphoenolpyruvate is bound at residue Q170. D311 functions as the Proton acceptor in the catalytic mechanism. Positions 342 and 384 each coordinate phosphoenolpyruvate.

Belongs to the EPSP synthase family. As to quaternary structure, monomer.

The protein localises to the cytoplasm. It carries out the reaction 3-phosphoshikimate + phosphoenolpyruvate = 5-O-(1-carboxyvinyl)-3-phosphoshikimate + phosphate. It participates in metabolic intermediate biosynthesis; chorismate biosynthesis. In terms of biological role, catalyzes the transfer of the enolpyruvyl moiety of phosphoenolpyruvate (PEP) to the 5-hydroxyl of shikimate-3-phosphate (S3P) to produce enolpyruvyl shikimate-3-phosphate and inorganic phosphate. This chain is 3-phosphoshikimate 1-carboxyvinyltransferase, found in Methanocaldococcus jannaschii (strain ATCC 43067 / DSM 2661 / JAL-1 / JCM 10045 / NBRC 100440) (Methanococcus jannaschii).